Here is a 105-residue protein sequence, read N- to C-terminus: Small ribosomal subunit protein uS10 (105 aa).

The protein belongs to the universal ribosomal protein uS10 family. As to quaternary structure, part of the 30S ribosomal subunit.

In terms of biological role, involved in the binding of tRNA to the ribosomes. In Acidobacterium capsulatum (strain ATCC 51196 / DSM 11244 / BCRC 80197 / JCM 7670 / NBRC 15755 / NCIMB 13165 / 161), this protein is Small ribosomal subunit protein uS10.